Reading from the N-terminus, the 544-residue chain is NADH-quinone oxidoreductase subunit C/D (544 aa).

Positions 1–138 are NADH dehydrogenase I subunit C; it reads MLNCDMLIDS…KGQICTETED (138 aa). The NADH dehydrogenase I subunit D stretch occupies residues 161-544; sequence MLLNVGPSHP…MNFIAGEFDR (384 aa).

This sequence in the N-terminal section; belongs to the complex I 30 kDa subunit family. It in the C-terminal section; belongs to the complex I 49 kDa subunit family. In terms of assembly, NDH-1 is composed of 13 different subunits. Subunits NuoB, CD, E, F, and G constitute the peripheral sector of the complex.

Its subcellular location is the cell inner membrane. It catalyses the reaction a quinone + NADH + 5 H(+)(in) = a quinol + NAD(+) + 4 H(+)(out). NDH-1 shuttles electrons from NADH, via FMN and iron-sulfur (Fe-S) centers, to quinones in the respiratory chain. The immediate electron acceptor for the enzyme in this species is believed to be ubiquinone. Couples the redox reaction to proton translocation (for every two electrons transferred, four hydrogen ions are translocated across the cytoplasmic membrane), and thus conserves the redox energy in a proton gradient. The protein is NADH-quinone oxidoreductase subunit C/D of Aliarcobacter butzleri (strain RM4018) (Arcobacter butzleri).